Consider the following 377-residue polypeptide: Meiotic driver cw9 (377 aa).

Disordered regions lie at residues methionine 1 to asparagine 49 and asparagine 64 to aspartate 100. Residues serine 11 to proline 29 show a composition bias toward basic and acidic residues. Helical transmembrane passes span phenylalanine 105–cysteine 125, tryptophan 142–phenylalanine 162, valine 172–valine 192, valine 218–phenylalanine 238, cysteine 252–leucine 272, phenylalanine 276–leucine 296, and alanine 306–tyrosine 326.

It belongs to the WTF family. In terms of assembly, homomer. Forms protein aggregates. The two isoforms can interact with each other and with themselves. High sequence similarity is required for their interaction.

It localises to the spore membrane. The protein resides in the vacuole membrane. The protein localises to the ascus epiplasm. It is found in the cytoplasm. Its subcellular location is the endoplasmic reticulum membrane. In terms of biological role, promotes unequal transmission of alleles from the parental zygote to progeny spores by acting as poison/antidote system where the poison and antidote proteins are produced from the same locus; the poison component is trans-acting and targets all spores within an ascus whereas the antidote component is spore-specific, leading to poisoning of all progeny that do not inherit the allele. Localizes isoform 2 to the vacuole thereby facilitating its degradation. Functionally, forms toxic aggregates that disrupt spore maturation. In Schizosaccharomyces pombe (Fission yeast), this protein is Meiotic driver cw9.